We begin with the raw amino-acid sequence, 161 residues long: Putative allophycocyanin subunit alpha 2 (161 aa).

At N71 the chain carries N4-methylasparagine. C81 is a (2R,3E)-phycocyanobilin binding site.

It belongs to the phycobiliprotein family. As to quaternary structure, heterohexamer of two alpha chains, one alpha-B chain and three beta chains. Post-translationally, contains one covalently linked phycocyanobilin chromophore. The chromophore is added by phycocyanobilin lyase CpcS 1.

It is found in the cellular thylakoid membrane. Its function is as follows. Light-harvesting photosynthetic bile pigment-protein from the phycobiliprotein complex. Allophycocyanin has a maximum absorption at approximately 650 to 653 nanometers. The sequence is that of Putative allophycocyanin subunit alpha 2 (apcA2) from Nostoc sp. (strain PCC 7120 / SAG 25.82 / UTEX 2576).